The following is a 479-amino-acid chain: Sulfate adenylyltransferase subunit 1 (479 aa).

One can recognise a tr-type G domain in the interval 25 to 239 (KSLLRFLTCG…EVLETVDIQR (215 aa)). The tract at residues 34-41 (GSVDDGKS) is G1. GTP is bound at residue 34–41 (GSVDDGKS). A G2 region spans residues 92 to 96 (GITID). Residues 113 to 116 (DTPG) form a G3 region. GTP is bound by residues 113 to 117 (DTPGH) and 168 to 171 (NKMD). Positions 168–171 (NKMD) are G4. Residues 206 to 208 (SAL) are G5.

The protein belongs to the TRAFAC class translation factor GTPase superfamily. Classic translation factor GTPase family. CysN/NodQ subfamily. As to quaternary structure, heterodimer composed of CysD, the smaller subunit, and CysN.

The catalysed reaction is sulfate + ATP + H(+) = adenosine 5'-phosphosulfate + diphosphate. It participates in sulfur metabolism; hydrogen sulfide biosynthesis; sulfite from sulfate: step 1/3. With CysD forms the ATP sulfurylase (ATPS) that catalyzes the adenylation of sulfate producing adenosine 5'-phosphosulfate (APS) and diphosphate, the first enzymatic step in sulfur assimilation pathway. APS synthesis involves the formation of a high-energy phosphoric-sulfuric acid anhydride bond driven by GTP hydrolysis by CysN coupled to ATP hydrolysis by CysD. The protein is Sulfate adenylyltransferase subunit 1 of Salmonella heidelberg (strain SL476).